The sequence spans 785 residues: Arrestin domain-containing protein D (785 aa).

Disordered regions lie at residues 29–69, 172–205, 326–367, 435–486, and 608–642; these read QNES…SKYP, ILLP…TTTT, SNNS…ITNN, SNSN…SDHN, and YSSS…LDEQ. The span at 173 to 205 shows a compositional bias: low complexity; it reads LLPTTTSTQNSTLSPTLLSSNLNSKSSTTTTTT. Residues 435–450 are compositionally biased toward low complexity; the sequence is SNSNSSSSGGSSNKNN. Residues 466–478 show a composition bias toward basic residues; that stretch reads SNKKSSGSHRYHY. Over residues 608–633 the composition is skewed to low complexity; that stretch reads YSSSGSGSGSGSSNSNSNHSSSNYLN. The segment at 682–742 adopts an FYVE-type zinc-finger fold; that stretch reads ESSITNCNLC…ICLMCFDAVK (61 aa). Residues cysteine 688, cysteine 691, cysteine 704, cysteine 707, cysteine 712, cysteine 715, cysteine 734, and cysteine 737 each coordinate Zn(2+). The segment at 688–738 adopts an RING-type; degenerate zinc-finger fold; that stretch reads CNLCDNTFTIIRRTHHCRACGGVFCEACSNQKVCLYGFGVNNKVRICLMCF.

This sequence belongs to the arrestin family.

This chain is Arrestin domain-containing protein D (adcD), found in Dictyostelium discoideum (Social amoeba).